The chain runs to 737 residues: Procollagen-lysine,2-oxoglutarate 5-dioxygenase 2 (737 aa).

A signal peptide spans 1-25; that stretch reads MGGCTVKPQLLLLALVLHPWNPCLG. Asn-63, Asn-209, and Asn-297 each carry an N-linked (GlcNAc...) asparagine glycan. Residue Thr-320 is modified to Phosphothreonine. At Tyr-323 the chain carries Phosphotyrosine. 2 N-linked (GlcNAc...) asparagine glycosylation sites follow: Asn-365 and Asn-522. The Fe2OG dioxygenase domain maps to 644-737; the sequence is KGFALLNFVV…RYIAVSFIDP (94 aa). The Fe cation site is built by His-666 and Asp-668. An N-linked (GlcNAc...) asparagine glycan is attached at Asn-696. Lys-704 is modified (N6-succinyllysine). Residue His-718 coordinates Fe cation. Asn-725 carries an N-linked (GlcNAc...) asparagine glycan. Arg-728 is a catalytic residue.

As to quaternary structure, homodimer. The cofactor is Fe(2+). L-ascorbate is required as a cofactor. Highly expressed in pancreas and muscle. Isoform 1 and isoform 2 are expressed in the majority of the examined cell types. Isoform 2 is specifically expressed in skin, lung, dura and aorta.

It localises to the rough endoplasmic reticulum membrane. It catalyses the reaction L-lysyl-[collagen] + 2-oxoglutarate + O2 = (5R)-5-hydroxy-L-lysyl-[collagen] + succinate + CO2. Forms hydroxylysine residues in -Xaa-Lys-Gly- sequences in collagens. These hydroxylysines serve as sites of attachment for carbohydrate units and are essential for the stability of the intermolecular collagen cross-links. The sequence is that of Procollagen-lysine,2-oxoglutarate 5-dioxygenase 2 from Homo sapiens (Human).